The primary structure comprises 391 residues: Putative glutamate--cysteine ligase 2-2 (391 aa).

It belongs to the glutamate--cysteine ligase type 2 family. YbdK subfamily.

The catalysed reaction is L-cysteine + L-glutamate + ATP = gamma-L-glutamyl-L-cysteine + ADP + phosphate + H(+). Functionally, ATP-dependent carboxylate-amine ligase which exhibits weak glutamate--cysteine ligase activity. This chain is Putative glutamate--cysteine ligase 2-2, found in Saccharopolyspora erythraea (strain ATCC 11635 / DSM 40517 / JCM 4748 / NBRC 13426 / NCIMB 8594 / NRRL 2338).